A 460-amino-acid chain; its full sequence is NADH-ubiquinone oxidoreductase chain 4 (460 aa).

A run of 13 helical transmembrane segments spans residues 22–42, 59–79, 93–113, 114–134, 148–168, 195–215, 225–245, 258–278, 286–306, 310–330, 351–371, 394–414, and 440–460; these read WLWP…LLWF, IDPL…LMIL, QRIY…AFSA, TELI…LIII, TYFL…LLLM, FWWT…GVHL, PIAG…YGMM, MAYP…SICL, LIAY…MIQT, FAGA…LFCL, VMLP…LALP, ILLT…MFLM, and LHLI…GWTF.

It belongs to the complex I subunit 4 family.

Its subcellular location is the mitochondrion membrane. It catalyses the reaction a ubiquinone + NADH + 5 H(+)(in) = a ubiquinol + NAD(+) + 4 H(+)(out). Its function is as follows. Core subunit of the mitochondrial membrane respiratory chain NADH dehydrogenase (Complex I) that is believed to belong to the minimal assembly required for catalysis. Complex I functions in the transfer of electrons from NADH to the respiratory chain. The immediate electron acceptor for the enzyme is believed to be ubiquinone. The protein is NADH-ubiquinone oxidoreductase chain 4 (MT-ND4) of Squalus acanthias (Spiny dogfish).